Consider the following 176-residue polypeptide: Probable non-specific lipid-transfer protein 1 (176 aa).

An N-terminal signal peptide occupies residues 1–37 (MRTVSAPSAVALVVIVAAGLAWTSLASVAPPAPAPGS). 4 disulfides stabilise this stretch: cysteine 41–cysteine 89, cysteine 51–cysteine 66, cysteine 67–cysteine 112, and cysteine 87–cysteine 128. The disordered stretch occupies residues 139–176 (QLPVSLRHGPVTGPSDPAHKARLERPQIRVPPPAPEKA). Positions 155–165 (PAHKARLERPQ) are enriched in basic and acidic residues. A compositionally biased stretch (pro residues) spans 167 to 176 (RVPPPAPEKA).

This sequence belongs to the plant LTP family.

Plant non-specific lipid-transfer proteins transfer phospholipids as well as galactolipids across membranes. May play a role in wax or cutin deposition in the cell walls of expanding epidermal cells and certain secretory tissues. The chain is Probable non-specific lipid-transfer protein 1 from Parietaria judaica (Pellitory-of-the-wall).